We begin with the raw amino-acid sequence, 215 residues long: UPF0502 protein YceH (215 aa).

Belongs to the UPF0502 family.

The protein is UPF0502 protein YceH of Salmonella heidelberg (strain SL476).